We begin with the raw amino-acid sequence, 360 residues long: D-alanine--D-alanine ligase (360 aa).

Residues 146-352 (KICAEHAGLH…FSQLIDRLLQ (207 aa)) form the ATP-grasp domain. 179–234 (LEEFTLPFFVKPASQGSSIGITKVHRPEELAAALEKAFMVDTKVLIEKTIEGREIE) contacts ATP. Residues Asp-305, Glu-319, and Asn-321 each coordinate Mg(2+).

It belongs to the D-alanine--D-alanine ligase family. Requires Mg(2+) as cofactor. Mn(2+) serves as cofactor.

It is found in the cytoplasm. The catalysed reaction is 2 D-alanine + ATP = D-alanyl-D-alanine + ADP + phosphate + H(+). Its pathway is cell wall biogenesis; peptidoglycan biosynthesis. Its function is as follows. Cell wall formation. The chain is D-alanine--D-alanine ligase from Prosthecochloris aestuarii (strain DSM 271 / SK 413).